Here is a 326-residue protein sequence, read N- to C-terminus: Zona pellucida-binding protein 2 (326 aa).

The first 19 residues, 1–19 (MLAWALLYAVLWSLAGVGS), serve as a signal peptide directing secretion. N-linked (GlcNAc...) asparagine glycans are attached at residues N86, N220, and N256.

Belongs to the zona pellucida-binding protein Sp38 family. In terms of processing, N-glycosylated. In terms of tissue distribution, expressed specifically in male germ cells.

The protein resides in the cytoplasmic vesicle. It localises to the secretory vesicle. The protein localises to the acrosome. It is found in the secreted. In terms of biological role, is implicated in sperm-oocyte interaction during fertilization. The polypeptide is Zona pellucida-binding protein 2 (Zpbp2) (Mus musculus (Mouse)).